The sequence spans 2475 residues: Gellan lyase (2475 aa).

An N-terminal signal peptide occupies residues 1-35 (MRFSWKKLVSAALVMALLVGIVYPAASGRGAVASA). Positions 623-708 (APANVQVAIS…QPATATSPGE (86 aa)) constitute a Fibronectin type-III domain. Positions 1295-1518 (GAFSLTIDDN…RDQIWVGRYG (224 aa)) constitute a NodB homology domain. Residues 2111-2223 (QPGQQLELTV…VSTAVSLSDF (113 aa)) enclose the Cohesin domain.

In terms of processing, subject to proteolytic processing after secretion. Cleavage occurs between Gly-1205 and Leu-1206. This gives rise to a N-terminal gellan lyase of 130 kDa being the mature form of the gellan lyase. The function of C-terminal gellan lyase is not known.

It is found in the secreted. The catalysed reaction is Eliminative cleavage of beta-D-glucopyranosyl-(1-&gt;4)-beta-D-glucopyranosyluronate bonds of gellan backbone releasing tetrasaccharides containing a 4-deoxy-4,5-unsaturated D-glucopyranosyluronic acid at the non-reducing end. The tetrasaccharide produced from deacetylated gellan is beta-D-4-deoxy-Delta(4)-GlcAp-(1-&gt;4)-beta-D-Glcp-(1-&gt;4)-alpha-L-Rhap-(1-&gt;3)-beta-D-Glcp.. Cleaves the glycosidic bonds of gellan backbone and releases tetrasaccharide units of glucuronyl-glucosyl-rhamnosyl-glucose with unsaturated glucuronic acid at the non-reducing terminal. The enzyme is highly specific to the heteropolysaccharide gellan, especially deacetylated gellan. The chain is Gellan lyase from Bacillus sp.